Here is a 355-residue protein sequence, read N- to C-terminus: Protein DVR-1 (355 aa).

An N-terminal signal peptide occupies residues 1-15; the sequence is MFLVLLRACLLTLSL. A propeptide spanning residues 16-240 is cleaved from the precursor; sequence CSPAEDDGLV…PLQCRSRRKR (225 aa). N-linked (GlcNAc...) asparagine glycosylation is found at asparagine 108, asparagine 179, and asparagine 296. Intrachain disulfides connect cysteine 254–cysteine 320, cysteine 283–cysteine 352, and cysteine 287–cysteine 354.

It belongs to the TGF-beta family. As to quaternary structure, homodimer. In terms of tissue distribution, abundant in ovaries and eggs, and equally distributed among all blastomeres.

It localises to the secreted. Serves to facilitate the differentiation of either mesoderm or endoderm either as a cofactor in an instructive signal or by providing permissive environment. The protein is Protein DVR-1 (dvr1) of Danio rerio (Zebrafish).